Consider the following 453-residue polypeptide: Nitrilotriacetate monooxygenase component A (453 aa).

Residues Asp-58, Thr-107, His-157, Tyr-161, Ser-231, and Ser-232 each contribute to the FMN site.

Belongs to the NtaA/SnaA/DszA monooxygenase family. Heterodimer of two subunits, A and B.

It carries out the reaction nitrilotriacetate + FMNH2 + O2 = aminodiacetate + FMN + glyoxylate + H2O. Functionally, hydroxylation of nitrilotriacetate. The protein is Nitrilotriacetate monooxygenase component A (ntaA) of Aminobacter aminovorans (Chelatobacter heintzii).